A 326-amino-acid chain; its full sequence is Aspartate carbamoyltransferase catalytic subunit (326 aa).

The carbamoyl phosphate site is built by R65 and T66. Position 93 (K93) interacts with L-aspartate. Positions 115, 143, and 146 each coordinate carbamoyl phosphate. Residues R176 and R230 each coordinate L-aspartate. Carbamoyl phosphate contacts are provided by G271 and P272.

Belongs to the aspartate/ornithine carbamoyltransferase superfamily. ATCase family. As to quaternary structure, heterododecamer (2C3:3R2) of six catalytic PyrB chains organized as two trimers (C3), and six regulatory PyrI chains organized as three dimers (R2).

The catalysed reaction is carbamoyl phosphate + L-aspartate = N-carbamoyl-L-aspartate + phosphate + H(+). It functions in the pathway pyrimidine metabolism; UMP biosynthesis via de novo pathway; (S)-dihydroorotate from bicarbonate: step 2/3. Catalyzes the condensation of carbamoyl phosphate and aspartate to form carbamoyl aspartate and inorganic phosphate, the committed step in the de novo pyrimidine nucleotide biosynthesis pathway. In Mesorhizobium japonicum (strain LMG 29417 / CECT 9101 / MAFF 303099) (Mesorhizobium loti (strain MAFF 303099)), this protein is Aspartate carbamoyltransferase catalytic subunit.